Here is a 203-residue protein sequence, read N- to C-terminus: ATP-dependent Clp protease proteolytic subunit (203 aa).

Ser100 serves as the catalytic Nucleophile. Residue His125 is part of the active site.

It belongs to the peptidase S14 family. Fourteen ClpP subunits assemble into 2 heptameric rings which stack back to back to give a disk-like structure with a central cavity, resembling the structure of eukaryotic proteasomes.

The protein localises to the cytoplasm. It carries out the reaction Hydrolysis of proteins to small peptides in the presence of ATP and magnesium. alpha-casein is the usual test substrate. In the absence of ATP, only oligopeptides shorter than five residues are hydrolyzed (such as succinyl-Leu-Tyr-|-NHMec, and Leu-Tyr-Leu-|-Tyr-Trp, in which cleavage of the -Tyr-|-Leu- and -Tyr-|-Trp bonds also occurs).. In terms of biological role, cleaves peptides in various proteins in a process that requires ATP hydrolysis. Has a chymotrypsin-like activity. Plays a major role in the degradation of misfolded proteins. This Anaeromyxobacter sp. (strain K) protein is ATP-dependent Clp protease proteolytic subunit.